The following is a 109-amino-acid chain: Large ribosomal subunit protein uL24 (109 aa).

This sequence belongs to the universal ribosomal protein uL24 family. Part of the 50S ribosomal subunit.

Functionally, one of two assembly initiator proteins, it binds directly to the 5'-end of the 23S rRNA, where it nucleates assembly of the 50S subunit. Its function is as follows. One of the proteins that surrounds the polypeptide exit tunnel on the outside of the subunit. In Hamiltonella defensa subsp. Acyrthosiphon pisum (strain 5AT), this protein is Large ribosomal subunit protein uL24.